The chain runs to 114 residues: Somatostatin-1A (114 aa).

The signal sequence occupies residues 1–24 (MLSTRIQCALALLSLALAVCSVSA). The propeptide occupies 25–88 (APTDAKLRQL…KDEVRLELER (64 aa)). Cys-103 and Cys-114 are disulfide-bonded.

The protein belongs to the somatostatin family.

Its subcellular location is the secreted. Somatostatin inhibits the release of somatotropin. This chain is Somatostatin-1A (sst1a), found in Carassius auratus (Goldfish).